The sequence spans 396 residues: Peroxisome proliferator-activated receptor delta (396 aa).

Residues 1 to 24 (MKEEIPPRSPILDEQPSTPLEHQE) are disordered. Polar residues predominate over residues 15–24 (QPSTPLEHQE). The nuclear receptor DNA-binding region spans 28 to 102 (SVDCKICGDR…LGMSHNAIRF (75 aa)). 2 consecutive NR C4-type zinc fingers follow at residues 31–51 (CKIC…CEGC) and 68–90 (CDRN…FNKC). An NR LBD domain is found at 166–394 (FVIHDMDTLW…HPLLQEIYRD (229 aa)).

Belongs to the nuclear hormone receptor family. NR1 subfamily. Heterodimer with the retinoid X receptor. In terms of processing, 'Lys-48'-linked polyubiquitinated; leading to proteasomal degradation. Deubiquitinated and stabilized by OTUD3. As to expression, ubiquitous.

The protein localises to the nucleus. Its function is as follows. Ligand-activated transcription factor key mediator of energy metabolism in adipose tissues. Receptor that binds peroxisome proliferators such as hypolipidemic drugs and fatty acids. Has a preference for poly-unsaturated fatty acids, such as gamma-linoleic acid and eicosapentanoic acid. Once activated by a ligand, the receptor binds to promoter elements of target genes. Regulates the peroxisomal beta-oxidation pathway of fatty acids. Functions as a transcription activator for the acyl-CoA oxidase gene. Decreases expression of NPC1L1 once activated by a ligand. This Xenopus laevis (African clawed frog) protein is Peroxisome proliferator-activated receptor delta (ppard).